The sequence spans 78 residues: Large ribosomal subunit protein bL28 (78 aa).

The disordered stretch occupies residues 1-24 (MSRVCQVTGKRPAVGNNRSHANNA).

It belongs to the bacterial ribosomal protein bL28 family.

The chain is Large ribosomal subunit protein bL28 from Aeromonas salmonicida (strain A449).